Reading from the N-terminus, the 262-residue chain is Phosphatidylglycerol--prolipoprotein diacylglyceryl transferase (262 aa).

Helical transmembrane passes span 9-29 (LGPL…ILAV), 41-61 (IIPD…ILGA), 80-100 (IFAI…GALV), and 109-129 (LINT…AQSL). Arginine 131 contributes to the a 1,2-diacyl-sn-glycero-3-phospho-(1'-sn-glycerol) binding site. Helical transmembrane passes span 167–187 (QPTF…ILIF), 197–217 (GHIT…IEGM), and 227–247 (LRVS…IVIY).

The protein belongs to the Lgt family.

It localises to the cell membrane. The catalysed reaction is L-cysteinyl-[prolipoprotein] + a 1,2-diacyl-sn-glycero-3-phospho-(1'-sn-glycerol) = an S-1,2-diacyl-sn-glyceryl-L-cysteinyl-[prolipoprotein] + sn-glycerol 1-phosphate + H(+). Its pathway is protein modification; lipoprotein biosynthesis (diacylglyceryl transfer). In terms of biological role, catalyzes the transfer of the diacylglyceryl group from phosphatidylglycerol to the sulfhydryl group of the N-terminal cysteine of a prolipoprotein, the first step in the formation of mature lipoproteins. The protein is Phosphatidylglycerol--prolipoprotein diacylglyceryl transferase of Streptococcus pneumoniae (strain JJA).